The chain runs to 79 residues: uncharacterized protein (79 aa).

2 consecutive transmembrane segments (helical) span residues 18 to 38 and 50 to 70; these read IWII…IVLI and GITF…FFLF.

It is found in the host membrane. This is an uncharacterized protein from Spiroplasma virus SpV1-R8A2 B (SpV1).